The primary structure comprises 342 residues: Aspartate carbamoyltransferase catalytic subunit (342 aa).

Residues arginine 54 and threonine 55 each contribute to the carbamoyl phosphate site. Lysine 82 is an L-aspartate binding site. 3 residues coordinate carbamoyl phosphate: arginine 104, histidine 134, and glutamine 137. L-aspartate contacts are provided by arginine 177 and arginine 232. Carbamoyl phosphate contacts are provided by glycine 277 and proline 278.

The protein belongs to the aspartate/ornithine carbamoyltransferase superfamily. ATCase family. Heterododecamer (2C3:3R2) of six catalytic PyrB chains organized as two trimers (C3), and six regulatory PyrI chains organized as three dimers (R2).

The enzyme catalyses carbamoyl phosphate + L-aspartate = N-carbamoyl-L-aspartate + phosphate + H(+). Its pathway is pyrimidine metabolism; UMP biosynthesis via de novo pathway; (S)-dihydroorotate from bicarbonate: step 2/3. Catalyzes the condensation of carbamoyl phosphate and aspartate to form carbamoyl aspartate and inorganic phosphate, the committed step in the de novo pyrimidine nucleotide biosynthesis pathway. The polypeptide is Aspartate carbamoyltransferase catalytic subunit (Pseudarthrobacter chlorophenolicus (strain ATCC 700700 / DSM 12829 / CIP 107037 / JCM 12360 / KCTC 9906 / NCIMB 13794 / A6) (Arthrobacter chlorophenolicus)).